A 518-amino-acid polypeptide reads, in one-letter code: Putative succinate-semialdehyde dehydrogenase [NADP(+)] 2 (518 aa).

NADP(+) contacts are provided by residues 157 to 158 (WN), 181 to 184 (KPDS), and 232 to 233 (GS). The Proton acceptor role is filled by E254. Position 255 (L255) interacts with NADP(+). The Nucleophile role is filled by C288. E386 provides a ligand contact to NADP(+).

It belongs to the aldehyde dehydrogenase family.

The catalysed reaction is succinate semialdehyde + NADP(+) + H2O = succinate + NADPH + 2 H(+). Functionally, catalyzes the NADP(+)-dependent oxidation of succinate semialdehyde to succinate. Although it has succinate semialdehyde dehydrogenase activity, is likely to act physiologically on a different aldehyde(s). This chain is Putative succinate-semialdehyde dehydrogenase [NADP(+)] 2 (gabD2), found in Mycobacterium ulcerans (strain Agy99).